The chain runs to 116 residues: MTIRTEKVASLLQKELSAIFEKELPRSGPLMTVVQVKVTTDLGIARVYVSIIGSEKERKTAIAHLQNETRYIRKLLSAKIRHQFRRIPELEFYEDRLYEKAERIDLLIKQALGTSK.

The protein belongs to the RbfA family. Monomer. Binds 30S ribosomal subunits, but not 50S ribosomal subunits or 70S ribosomes.

It localises to the cytoplasm. In terms of biological role, one of several proteins that assist in the late maturation steps of the functional core of the 30S ribosomal subunit. Associates with free 30S ribosomal subunits (but not with 30S subunits that are part of 70S ribosomes or polysomes). Required for efficient processing of 16S rRNA. May interact with the 5'-terminal helix region of 16S rRNA. The protein is Ribosome-binding factor A of Chlorobium phaeobacteroides (strain BS1).